The chain runs to 88 residues: Small ribosomal subunit protein uS15 (88 aa).

The protein belongs to the universal ribosomal protein uS15 family. Part of the 30S ribosomal subunit. Forms a bridge to the 50S subunit in the 70S ribosome, contacting the 23S rRNA.

Functionally, one of the primary rRNA binding proteins, it binds directly to 16S rRNA where it helps nucleate assembly of the platform of the 30S subunit by binding and bridging several RNA helices of the 16S rRNA. Forms an intersubunit bridge (bridge B4) with the 23S rRNA of the 50S subunit in the ribosome. In Acidovorax sp. (strain JS42), this protein is Small ribosomal subunit protein uS15.